Reading from the N-terminus, the 250-residue chain is 3-deoxy-manno-octulosonate cytidylyltransferase (250 aa).

It belongs to the KdsB family.

Its subcellular location is the cytoplasm. The catalysed reaction is 3-deoxy-alpha-D-manno-oct-2-ulosonate + CTP = CMP-3-deoxy-beta-D-manno-octulosonate + diphosphate. Its pathway is nucleotide-sugar biosynthesis; CMP-3-deoxy-D-manno-octulosonate biosynthesis; CMP-3-deoxy-D-manno-octulosonate from 3-deoxy-D-manno-octulosonate and CTP: step 1/1. It participates in bacterial outer membrane biogenesis; lipopolysaccharide biosynthesis. In terms of biological role, activates KDO (a required 8-carbon sugar) for incorporation into bacterial lipopolysaccharide in Gram-negative bacteria. The protein is 3-deoxy-manno-octulosonate cytidylyltransferase of Legionella pneumophila (strain Paris).